Reading from the N-terminus, the 215-residue chain is Probable nicotinate-nucleotide adenylyltransferase (215 aa).

Belongs to the NadD family.

It catalyses the reaction nicotinate beta-D-ribonucleotide + ATP + H(+) = deamido-NAD(+) + diphosphate. It functions in the pathway cofactor biosynthesis; NAD(+) biosynthesis; deamido-NAD(+) from nicotinate D-ribonucleotide: step 1/1. Its function is as follows. Catalyzes the reversible adenylation of nicotinate mononucleotide (NaMN) to nicotinic acid adenine dinucleotide (NaAD). In Coxiella burnetii (strain RSA 331 / Henzerling II), this protein is Probable nicotinate-nucleotide adenylyltransferase.